The sequence spans 496 residues: Alanine aminotransferase 1 (496 aa).

N-acetylalanine is present on A2. At T22 the chain carries Phosphothreonine. N6-(pyridoxal phosphate)lysine is present on K314.

It belongs to the class-I pyridoxal-phosphate-dependent aminotransferase family. Alanine aminotransferase subfamily. As to quaternary structure, homodimer. Pyridoxal 5'-phosphate serves as cofactor. In terms of tissue distribution, liver, heart, skeletal muscle, etc.

Its subcellular location is the cytoplasm. The enzyme catalyses L-alanine + 2-oxoglutarate = pyruvate + L-glutamate. It functions in the pathway amino-acid degradation; L-alanine degradation via transaminase pathway; pyruvate from L-alanine: step 1/1. Catalyzes the reversible transamination between alanine and 2-oxoglutarate to form pyruvate and glutamate. Participates in cellular nitrogen metabolism and also in liver gluconeogenesis starting with precursors transported from skeletal muscles. In Rattus norvegicus (Rat), this protein is Alanine aminotransferase 1 (Gpt).